We begin with the raw amino-acid sequence, 907 residues long: CRM-domain containing factor CFM3B, chloroplastic (907 aa).

A chloroplast-targeting transit peptide spans 1–59; sequence MAINSSHHFCPMTTTTTTSAKFVDSLGSSFCKFHGTSSSISLRSYRFGFSFMKNVKRLS. 2 disordered regions span residues 62 to 89 and 101 to 123; these read GSSS…SKVV and LGVI…GSSS. The span at 70-84 shows a compositional bias: polar residues; sequence RNENWNRTQKQNQFR. 2 consecutive CRM domains span residues 220–316 and 421–518; these read MTLS…DGSG and STLG…EVGE. Positions 621-654 form a coiled coil; that stretch reads SAKLVRKLERKLAFAEKKLLKAERALAKVEESLK. In terms of domain architecture, CRM 3 spans 663 to 763; it reads EGITEEERFM…KDYKRPTTLR (101 aa). Residues 824–907 form a disordered region; sequence MAYSSDEETE…LQNEELDVQP (84 aa). 2 stretches are compositionally biased toward acidic residues: residues 828-857 and 868-881; these read SDEE…DEEG and TDVE…DTDF. Over residues 882–897 the composition is skewed to polar residues; the sequence is GDNSASSTTPETTFVE.

As to quaternary structure, interacts with RNA. Part of large ribonucleo-protein particles that contain CAF1 and/or CAF2, and RNC1. Interacts with RFC3 in plastids. In terms of tissue distribution, expressed at low levels in roots and shoots.

Its subcellular location is the plastid. It localises to the chloroplast. Its function is as follows. Binds specific group II introns in chloroplasts and facilitates their splicing. Exhibits non-specific action during plastid rRNA biogenesis; RFC3 prevents unaccurate splicing to improve the accuracy of plastid rRNA processing. Acts on subgroup IIB introns. The substrates of the subgroup IIB also require the CRM domain proteins CAF1 or CAF2, with a simultaneous binding of CFM3B and CAF1 or CAF2. Required for seed development. This is CRM-domain containing factor CFM3B, chloroplastic from Arabidopsis thaliana (Mouse-ear cress).